A 351-amino-acid polypeptide reads, in one-letter code: Transcription factor bHLH93 (351 aa).

Positions 174–223 (GQPSKNLMAERRRRKRLNDRLSMLRSIVPKISKMDRTSILGDAIDYMKEL) constitute a bHLH domain.

As to quaternary structure, homodimer. Interacts with FAMA. As to expression, broadly expressed.

The protein resides in the nucleus. In terms of biological role, transcription factor. May be involved in the differentiation of stomatal guard cells. In Arabidopsis thaliana (Mouse-ear cress), this protein is Transcription factor bHLH93 (BHLH93).